Consider the following 456-residue polypeptide: Septin-10 (456 aa).

A Septin-type G domain is found at 40–306; that stretch reads QGFCFNILCV…ELYRRCKLQE (267 aa). The G1 motif stretch occupies residues 50–57; that stretch reads GETGIGKS. GTP contacts are provided by residues 50–57, Gly-105, 186–194, Gly-240, and Arg-255; these read GETGIGKS and KADTISKSE. The G3 motif stretch occupies residues 102–105; that stretch reads NTVG. Residues 185 to 188 form a G4 motif region; the sequence is AKAD. At Ser-418 the chain carries Phosphoserine.

The protein belongs to the TRAFAC class TrmE-Era-EngA-EngB-Septin-like GTPase superfamily. Septin GTPase family. In terms of assembly, septins polymerize into heterooligomeric protein complexes that form filaments, and can associate with cellular membranes, actin filaments and microtubules. GTPase activity is required for filament formation. Interacts with ADGB. Post-translationally, proteolytically cleaved in vitro in a calmodulin-dependent manner.

It localises to the cytoplasm. The protein localises to the cytoskeleton. It is found in the cell projection. The protein resides in the cilium. Its subcellular location is the flagellum. Filament-forming cytoskeletal GTPase. May play a role in cytokinesis (Potential). The polypeptide is Septin-10 (Rattus norvegicus (Rat)).